The following is a 48-amino-acid chain: Large ribosomal subunit protein bL34 (48 aa).

Belongs to the bacterial ribosomal protein bL34 family.

This Mycoplasma genitalium (strain ATCC 33530 / DSM 19775 / NCTC 10195 / G37) (Mycoplasmoides genitalium) protein is Large ribosomal subunit protein bL34 (rpmH).